The following is a 492-amino-acid chain: MFSKLTPLAETGIPTLSCANAAGRLLHSDSRQIKQGDIFVACPGEYADGRSYIPAAVANGAAFVFWDDDGKFAWNPEWKVPNQGIKDLKHRAGILAAQVYGNVSDGLKFWGVTGTNGKTSITQWLAQAADLLGEKTAIVGTVGNGFWGALEETTHTTPAPVDVQTLLYRFRQQGATVAAMEVSSHGLDQSRVNGVSFRSAIFTNLTRDHLDYHGTMEAYGAIKSRLFYWHGLKHAVINVDDEYGAELAGRLKKDCPDLAVYSYGFSEQADIRIIDFTASSDGIAAVFQTPWGEGKCRTRLLGRFNAQNLAACIALLCANGYPLDNVLDVLAKIRPASGRMDCIMNSGKPLVVVDYAHTPDALEKALATLQEIKPQGAALWCVFGCGGNRDRGKRPLMGAAAVQGADKVVVTSDNPRLENPHDIINDILPAVPAPECVEADRAAAIRYAVEQAAANDIILIAGKGHENYQDVQGVKHRFSDLEIVGQALLTRK.

Residue S30 participates in UDP-N-acetyl-alpha-D-muramoyl-L-alanyl-D-glutamate binding. 114–120 (GTNGKTS) is an ATP binding site. Residues 156–157 (TT), S183, Q189, and R191 each bind UDP-N-acetyl-alpha-D-muramoyl-L-alanyl-D-glutamate. K223 is modified (N6-carboxylysine). Residues R389, 413-416 (DNPR), G462, and E466 contribute to the meso-2,6-diaminopimelate site. A Meso-diaminopimelate recognition motif motif is present at residues 413 to 416 (DNPR).

It belongs to the MurCDEF family. MurE subfamily. Mg(2+) serves as cofactor. Carboxylation is probably crucial for Mg(2+) binding and, consequently, for the gamma-phosphate positioning of ATP.

It localises to the cytoplasm. It catalyses the reaction UDP-N-acetyl-alpha-D-muramoyl-L-alanyl-D-glutamate + meso-2,6-diaminopimelate + ATP = UDP-N-acetyl-alpha-D-muramoyl-L-alanyl-gamma-D-glutamyl-meso-2,6-diaminopimelate + ADP + phosphate + H(+). Its pathway is cell wall biogenesis; peptidoglycan biosynthesis. Its function is as follows. Catalyzes the addition of meso-diaminopimelic acid to the nucleotide precursor UDP-N-acetylmuramoyl-L-alanyl-D-glutamate (UMAG) in the biosynthesis of bacterial cell-wall peptidoglycan. This chain is UDP-N-acetylmuramoyl-L-alanyl-D-glutamate--2,6-diaminopimelate ligase, found in Neisseria meningitidis serogroup A / serotype 4A (strain DSM 15465 / Z2491).